A 208-amino-acid polypeptide reads, in one-letter code: Interleukin-6 (208 aa).

A signal peptide spans 1–29; that stretch reads MNSRFTSAFTPFAVSLGLLLVMTSAFPTP. A glycan (N-linked (GlcNAc...) asparagine) is linked at asparagine 38. The cysteines at positions 72 and 78 are disulfide-linked. Position 81 is a phosphoserine (serine 81). Cysteine 101 and cysteine 111 are oxidised to a cystine.

This sequence belongs to the IL-6 superfamily. In terms of assembly, component of a hexamer of two molecules each of IL6, IL6R and IL6ST; first binds to IL6R to associate with the signaling subunit IL6ST. Interacts with IL6R (via the N-terminal ectodomain); this interaction may be affected by IL6R-binding with SORL1, hence decreasing IL6 cis signaling. Interacts with SORL1 (via the N-terminal ectodomain); this interaction leads to IL6 internalization and lysosomal degradation. May form a trimeric complex with the soluble SORL1 ectodomain and soluble IL6R receptor; this interaction might stabilize circulating IL6, hence promoting IL6 trans signaling.

Its subcellular location is the secreted. Its function is as follows. Cytokine with a wide variety of biological functions in immunity, tissue regeneration, and metabolism. Binds to IL6R, then the complex associates to the signaling subunit IL6ST/gp130 to trigger the intracellular IL6-signaling pathway. The interaction with the membrane-bound IL6R and IL6ST stimulates 'classic signaling', whereas the binding of IL6 and soluble IL6R to IL6ST stimulates 'trans-signaling'. Alternatively, 'cluster signaling' occurs when membrane-bound IL6:IL6R complexes on transmitter cells activate IL6ST receptors on neighboring receiver cells. IL6 is a potent inducer of the acute phase response. Rapid production of IL6 contributes to host defense during infection and tissue injury, but excessive IL6 synthesis is involved in disease pathology. In the innate immune response, is synthesized by myeloid cells, such as macrophages and dendritic cells, upon recognition of pathogens through toll-like receptors (TLRs) at the site of infection or tissue injury. In the adaptive immune response, is required for the differentiation of B cells into immunoglobulin-secreting cells. Plays a major role in the differentiation of CD4(+) T cell subsets. Essential factor for the development of T follicular helper (Tfh) cells that are required for the induction of germinal-center formation. Required to drive naive CD4(+) T cells to the Th17 lineage. Also required for proliferation of myeloma cells and the survival of plasmablast cells. Functionally, acts as an essential factor in bone homeostasis and on vessels directly or indirectly by induction of VEGF, resulting in increased angiogenesis activity and vascular permeability. Induces, through 'trans-signaling' and synergistically with IL1B and TNF, the production of VEGF. Involved in metabolic controls, is discharged into the bloodstream after muscle contraction increasing lipolysis and improving insulin resistance. 'Trans-signaling' in central nervous system also regulates energy and glucose homeostasis. Mediates, through GLP-1, crosstalk between insulin-sensitive tissues, intestinal L cells and pancreatic islets to adapt to changes in insulin demand. Also acts as a myokine. Plays a protective role during liver injury, being required for maintenance of tissue regeneration. Also has a pivotal role in iron metabolism by regulating HAMP/hepcidin expression upon inflammation or bacterial infection. Through activation of IL6ST-YAP-NOTCH pathway, induces inflammation-induced epithelial regeneration. The polypeptide is Interleukin-6 (IL6) (Bubalus bubalis (Domestic water buffalo)).